A 489-amino-acid polypeptide reads, in one-letter code: tRNA(Ile)-lysidine synthase (489 aa).

Ser-35–Ser-40 is a binding site for ATP.

Belongs to the tRNA(Ile)-lysidine synthase family.

It is found in the cytoplasm. The enzyme catalyses cytidine(34) in tRNA(Ile2) + L-lysine + ATP = lysidine(34) in tRNA(Ile2) + AMP + diphosphate + H(+). In terms of biological role, ligates lysine onto the cytidine present at position 34 of the AUA codon-specific tRNA(Ile) that contains the anticodon CAU, in an ATP-dependent manner. Cytidine is converted to lysidine, thus changing the amino acid specificity of the tRNA from methionine to isoleucine. The chain is tRNA(Ile)-lysidine synthase from Burkholderia pseudomallei (strain K96243).